A 594-amino-acid polypeptide reads, in one-letter code: Neuronal PAS domain-containing protein 1 (594 aa).

One can recognise a bHLH domain in the interval 45-98; the sequence is QRKEKSRNAARWRRGKENLEFFELAKLLPLPGAISSQLDKASIVRLSVTYLRLR. The PAS 1 domain maps to 135–205; the sequence is EQHLGGHILQ…EQLGLRAASI (71 aa). Residues 206 to 237 are disordered; it reads GPPTPPSVSSSSSSSSSSLVDTPEIEASPTEA. Low complexity predominate over residues 212 to 223; it reads SVSSSSSSSSSS. In terms of domain architecture, PAS 2 spans 294–360; sequence APLAELPLHG…IRQSHLDLLD (67 aa). A PAC domain is found at 366–409; the sequence is TGYYRWLQRAGGFVWLQSVATVAGNGKSTGEHHVLWVSHVLSNA. A disordered region spans residues 427–498; that stretch reads QEEPSRPGPE…DPPAPPRPEF (72 aa). The span at 453–480 shows a compositional bias: basic and acidic residues; sequence DQDKDKDPQARGKRIKVEASPKEARGSE.

In terms of assembly, efficient DNA binding requires dimerization with another bHLH protein. Interacts with ARNT; forms a heterodimer that binds core DNA sequence 5'-[AG]CGTG-3' within the hypoxia response element (HRE) leading to a transcriptional repressor on its target gene TH. In terms of tissue distribution, expressed in brain in inhibitory interneurons. Also found in spinal cord.

It localises to the nucleus. In terms of biological role, may control regulatory pathways relevant to schizophrenia and to psychotic illness. May play a role in late central nervous system development by modulating EPO expression in response to cellular oxygen level. Forms a heterodimer that binds core DNA sequence 5'-TACGTG-3' within the hypoxia response element (HRE) leading to transcriptional repression on its target gene TH. The chain is Neuronal PAS domain-containing protein 1 (Npas1) from Mus musculus (Mouse).